Reading from the N-terminus, the 328-residue chain is Phosphate acyltransferase (328 aa).

This sequence belongs to the PlsX family. Homodimer. Probably interacts with PlsY.

It localises to the cytoplasm. The enzyme catalyses a fatty acyl-[ACP] + phosphate = an acyl phosphate + holo-[ACP]. It functions in the pathway lipid metabolism; phospholipid metabolism. Its function is as follows. Catalyzes the reversible formation of acyl-phosphate (acyl-PO(4)) from acyl-[acyl-carrier-protein] (acyl-ACP). This enzyme utilizes acyl-ACP as fatty acyl donor, but not acyl-CoA. In Geobacillus thermodenitrificans (strain NG80-2), this protein is Phosphate acyltransferase.